Reading from the N-terminus, the 66-residue chain is Large ribosomal subunit protein bL31 (66 aa).

Zn(2+)-binding residues include cysteine 16, cysteine 18, cysteine 36, and cysteine 39.

It belongs to the bacterial ribosomal protein bL31 family. Type A subfamily. Part of the 50S ribosomal subunit. Requires Zn(2+) as cofactor.

Binds the 23S rRNA. In Campylobacter fetus subsp. fetus (strain 82-40), this protein is Large ribosomal subunit protein bL31.